The chain runs to 118 residues: UPF0058 protein MJ1132 (118 aa).

It belongs to the UPF0058 family.

The protein is UPF0058 protein MJ1132 of Methanocaldococcus jannaschii (strain ATCC 43067 / DSM 2661 / JAL-1 / JCM 10045 / NBRC 100440) (Methanococcus jannaschii).